The sequence spans 1681 residues: Y' element ATP-dependent helicase protein 1 copy 2 (1681 aa).

One can recognise a Helicase ATP-binding domain in the interval 683–860; the sequence is EIYMADTPSV…LQRIGLTGLA (178 aa). 696-703 serves as a coordination point for ATP; it reads APPGYGKT. Residues 917–1066 form the Helicase C-terminal domain; the sequence is KLLLALFEIE…EFYGLESKKG (150 aa). The segment covering 1140–1283 has biased composition (low complexity); it reads ANASTNATTN…ATTTESTNAS (144 aa). The interval 1140–1307 is disordered; sequence ANASTNATTN…RFHPVTDINK (168 aa). The span at 1284-1307 shows a compositional bias: basic and acidic residues; it reads AKEDANKDGNAEDNRFHPVTDINK.

The protein belongs to the helicase family. Yeast subtelomeric Y' repeat subfamily.

Functionally, catalyzes DNA unwinding and is involved in telomerase-independent telomere maintenance. This Saccharomyces cerevisiae (strain ATCC 204508 / S288c) (Baker's yeast) protein is Y' element ATP-dependent helicase protein 1 copy 2 (YRF1-2).